A 204-amino-acid chain; its full sequence is Signal peptidase I (204 aa).

The Cytoplasmic segment spans residues 1–10 (MNLFKNFLKE). Residues 11–30 (WGLFLLILSLLALSRIFFWS) traverse the membrane as a helical segment. At 31–204 (NVRVEGHSMD…FWPITRIGTF (174 aa)) the chain is on the extracellular side. Active-site residues include S38 and K76.

Belongs to the peptidase S26 family.

Its subcellular location is the cell membrane. The catalysed reaction is Cleavage of hydrophobic, N-terminal signal or leader sequences from secreted and periplasmic proteins.. The protein is Signal peptidase I (lepB) of Streptococcus pneumoniae (strain ATCC BAA-255 / R6).